Reading from the N-terminus, the 439-residue chain is Xylose isomerase (439 aa).

Active-site residues include His-101 and Asp-104. Residues Glu-232, Glu-268, His-271, Asp-296, Asp-307, Asp-309, and Asp-339 each contribute to the Mg(2+) site.

Belongs to the xylose isomerase family. As to quaternary structure, homotetramer. It depends on Mg(2+) as a cofactor.

The protein resides in the cytoplasm. It carries out the reaction alpha-D-xylose = alpha-D-xylulofuranose. The chain is Xylose isomerase from Marinomonas sp. (strain MWYL1).